A 347-amino-acid chain; its full sequence is uncharacterized protein (347 aa).

An N-terminal signal peptide occupies residues 1–21 (MRYRIFLLFFFALLPTSLVWA).

This is an uncharacterized protein from Escherichia coli (strain K12).